The chain runs to 408 residues: Intracellular coagulation inhibitor 2 (408 aa).

The N-terminal stretch at methionine 1–glutamine 22 is a signal peptide. Cysteine 50 and cysteine 249 form a disulfide bridge. Residue asparagine 174 is glycosylated (N-linked (GlcNAc...) asparagine).

The protein belongs to the serpin family. Monomer. Forms a covalent heterodimer with clotting factor C chain B. Forms a covalent heterodimer with proclotting enzyme heavy chain. Specifically expressed in hemocytes (at protein level).

It is found in the secreted. Serine protease inhibitor that inhibits proclotting enzyme and to a lesser extent clotting factor C and clotting factor G. The chain is Intracellular coagulation inhibitor 2 from Tachypleus tridentatus (Japanese horseshoe crab).